We begin with the raw amino-acid sequence, 479 residues long: Ribosomal RNA small subunit methyltransferase F (479 aa).

Residues 125–131 (AAAPGSK), glutamate 149, aspartate 176, and aspartate 194 contribute to the S-adenosyl-L-methionine site. The active-site Nucleophile is cysteine 247.

This sequence belongs to the class I-like SAM-binding methyltransferase superfamily. RsmB/NOP family.

The protein localises to the cytoplasm. The enzyme catalyses cytidine(1407) in 16S rRNA + S-adenosyl-L-methionine = 5-methylcytidine(1407) in 16S rRNA + S-adenosyl-L-homocysteine + H(+). Its function is as follows. Specifically methylates the cytosine at position 1407 (m5C1407) of 16S rRNA. This Salmonella paratyphi B (strain ATCC BAA-1250 / SPB7) protein is Ribosomal RNA small subunit methyltransferase F.